The primary structure comprises 514 residues: MVLDLDLFRVDKGGDPALIRETQEKRFKDPGLVDQLVKADSEWRRCRFRADNLNKLKNLCSKTIGEKMKKKEPVGDDESIPENVLNFDDVTADTLTNLKVSQIKKVRLLIDEAILKCDAERIKLEAERFESLREIGNLLHPSVPISNDEDADNKVERIWGDCTVRKKYSHVDLVVMVDGFEGEKGAVVAGSRGYFLKGVLVFLEQALIQYALRTLRNRGYTPIYTPFFMRKEVMQEVAQLSQFDEELYKVIGKGSEKSDDNSYDEKYLIATSEQPIAALHRDEWLRPEDLPIKYAGLSTCFRQEVGSHGRDTRGIFRVHQFEKIEQFVYSSPHDNKSWEMFEEMIATAEEFYQSLGIPYHIVNIVSGSLNHAASKKLDLEAWFPGSGAFRELVSCSNCTDYQARRLRIRYGQTKKMMDKVEFVHMLNATMCATTRTICAILENYQTEKGIIVPEKLKEFMPPGLQELIPFVKPAPIDQEPSKKQKKQHEGSKKKAAARDVTLENRLQNMEVTDA.

Position 1 is an N-acetylmethionine (M1). The segment at 9-61 (RVDKGGDPALIRETQEKRFKDPGLVDQLVKADSEWRRCRFRADNLNKLKNLCS) is interaction with tRNA. S241 is subject to Phosphoserine. L-serine contacts are provided by T271 and R302. ATP contacts are provided by residues 302 to 304 (RQE) and 318 to 321 (VHQF). K323 carries the N6-acetyllysine modification. Residue E325 participates in L-serine binding. 391–394 (ELVS) contributes to the ATP binding site. N427 serves as a coordination point for L-serine. Positions 472 to 514 (KPAPIDQEPSKKQKKQHEGSKKKAAARDVTLENRLQNMEVTDA) are disordered. Basic and acidic residues predominate over residues 479-502 (EPSKKQKKQHEGSKKKAAARDVTL). Residues 482–494 (KKQKKQHEGSKKK) carry the Nuclear localization signal motif. Positions 504–514 (NRLQNMEVTDA) are enriched in polar residues.

The protein belongs to the class-II aminoacyl-tRNA synthetase family. Type-1 seryl-tRNA synthetase subfamily. In terms of assembly, homodimer. The tRNA molecule may bind across the dimer. Interacts with SIRT2. Interacts with METTL6; interaction is required for the tRNA N(3)-methylcytidine methyltransferase activity of METTL6.

The protein localises to the cytoplasm. The protein resides in the nucleus. The catalysed reaction is tRNA(Ser) + L-serine + ATP = L-seryl-tRNA(Ser) + AMP + diphosphate + H(+). It catalyses the reaction tRNA(Sec) + L-serine + ATP = L-seryl-tRNA(Sec) + AMP + diphosphate + H(+). Its pathway is aminoacyl-tRNA biosynthesis; selenocysteinyl-tRNA(Sec) biosynthesis; L-seryl-tRNA(Sec) from L-serine and tRNA(Sec): step 1/1. Catalyzes the attachment of serine to tRNA(Ser) in a two-step reaction: serine is first activated by ATP to form Ser-AMP and then transferred to the acceptor end of tRNA(Ser). Is probably also able to aminoacylate tRNA(Sec) with serine, to form the misacylated tRNA L-seryl-tRNA(Sec), which will be further converted into selenocysteinyl-tRNA(Sec). In the nucleus, binds to the VEGFA core promoter and prevents MYC binding and transcriptional activation by MYC. Recruits SIRT2 to the VEGFA promoter, promoting deacetylation of histone H4 at 'Lys-16' (H4K16). Thereby, inhibits the production of VEGFA and sprouting angiogenesis mediated by VEGFA. This chain is Serine--tRNA ligase, cytoplasmic (SARS1), found in Oryctolagus cuniculus (Rabbit).